A 236-amino-acid chain; its full sequence is Purine nucleoside phosphorylase DeoD-type (236 aa).

Residue histidine 4 participates in a purine D-ribonucleoside binding. Residues glycine 20, arginine 24, arginine 43, and 87–90 contribute to the phosphate site; that span reads RVGT. Residues 179–181 and 203–204 each bind a purine D-ribonucleoside; these read EME and SD. Aspartate 204 serves as the catalytic Proton donor.

The protein belongs to the PNP/UDP phosphorylase family. As to quaternary structure, homohexamer; trimer of homodimers.

It catalyses the reaction a purine D-ribonucleoside + phosphate = a purine nucleobase + alpha-D-ribose 1-phosphate. The enzyme catalyses a purine 2'-deoxy-D-ribonucleoside + phosphate = a purine nucleobase + 2-deoxy-alpha-D-ribose 1-phosphate. In terms of biological role, catalyzes the reversible phosphorolytic breakdown of the N-glycosidic bond in the beta-(deoxy)ribonucleoside molecules, with the formation of the corresponding free purine bases and pentose-1-phosphate. The sequence is that of Purine nucleoside phosphorylase DeoD-type from Streptococcus pneumoniae (strain CGSP14).